Consider the following 327-residue polypeptide: BTB/POZ domain-containing protein KCTD12 (327 aa).

Residues 1–28 (MALADSARGLPNGGGGGGGSGSSSSSAE) are disordered. Residue Ala-2 is modified to N-acetylalanine. A compositionally biased stretch (gly residues) spans 11–21 (PNGGGGGGGSG). Tyr-119 is subject to Phosphotyrosine. The disordered stretch occupies residues 129-204 (LGAPQQPGPG…PLLTPSQSLD (76 aa)). A phosphoserine mark is found at Ser-153, Ser-173, and Ser-187. Residue Thr-198 is modified to Phosphothreonine. Ser-202 carries the post-translational modification Phosphoserine.

As to quaternary structure, interacts as a tetramer with GABBR1 and GABBR2. As to expression, expressed in the brain, mainly in the hippocampus and cerebellum.

The protein resides in the presynaptic cell membrane. It localises to the postsynaptic cell membrane. Functionally, auxiliary subunit of GABA-B receptors that determine the pharmacology and kinetics of the receptor response. Increases agonist potency and markedly alter the G-protein signaling of the receptors by accelerating onset and promoting desensitization. The protein is BTB/POZ domain-containing protein KCTD12 (Kctd12) of Mus musculus (Mouse).